The sequence spans 3034 residues: MAPSSPRVLPALVLLAAAALPALELGAAAWELRVPGGARAFALGPGWSYRLDTTRTPRELLDVSREGPAAGRRLGLGAGTLGCARLAGRLLPLQVRLVARGAPTAPSLVLRARAYGARCGVRLLRRSARGAELRSPAVRSVPGLGDALCFPAAGGGAASLTSVLEAITNFPACSCPPVAGTGCRRGPICLRPGGSAELRLVCALGRAAGAVWVELVIEATSGTPSESPSVSPSLLNLSQPRAGVVRRSRRGTGSSTSPQFPLPSYQVSVPENEPAGTAVIELRAHDPDEGDAGRLSYQMEALFDERSNGYFLIDAATGAVTTARSLDRETKDTHVLKVSAVDHGSPRRSAATYLTVTVSDTNDHSPVFEQSEYRERIRENLEVGYEVLTIRATDGDAPSNANMRYRLLEGAGGVFEIDARSGVVRTRAVVDREEAAEYQLLVEANDQGRNPGPLSASATVHIVVEDENDNYPQFSEKRYVVQVPEDVAVNTAVLRVQATDRDQGQNAAIHYSIVSGNLKGQFYLHSLSGSLDVINPLDFEAIREYTLRIKAQDGGRPPLINSSGLVSVQVLDVNDNAPIFVSSPFQAAVLENVPLGHSVLHIQAVDADAGENARLQYRLVDTASTIVGGSSVDSENPASAPDFPFQIHNSSGWITVCAELDREEVEHYSFGVEAVDHGSPAMSSSASVSITVLDVNDNDPMFTQPVYELRLNEDAAVGSSVLTLRARDRDANSVITYQLTGGNTRNRFALSSQSGGGLITLALPLDYKQERQYVLAVTASDGTRSHTAQVFINVTDANTHRPVFQSSHYTVSVSEDRPVGTSIATISATDEDTGENARITYVLEDPVPQFRIDPDTGTIYTMTELDYEDQAAYTLAITAQDNGIPQKSDTTSLEILILDANDNAPRFLRDFYQGSVFEDAPPSTSVLQVSATDRDSGPNGRLLYTFQGGDDGDGDFYIEPTSGVIRTQRRLDRENVAVYNLWALAVDRGSPNPLSASVGIQVSVLDINDNPPVFEKDELELFVEENSPVGSVVARIRANDPDEGPNAQIMYQIVEGNVPEVFQLDLLSGDLRALVELDFEVRRDYMLVVQATSAPLVSRATVHIRLLDQNDNPPELPDFQILFNNYVTNKSNSFPSGVIGRIPAHDPDLSDSLNYTFLQGNELSLLLLDPATGELQLSRDLDNNRPLEALMEVSVSDGIHSVTALCTLRVTIITDDMLTNSITVRLENMSQEKFLSPLLSLFVEGVATVLSTTKDDIFVFNIQNDTDVSSNILNVTFSALLPGGTRGRFFPSEDLQEQIYLNRTLLTTISAQRVLPFDDNICLREPCENYMKCVSVLRFDSSAPFISSTTVLFRPIHPITGLRCRCPPGFTGDYCETEIDLCYSNPCGANGRCRSREGGYTCECFEDFTGEHCQVNVRSGRCASGVCKNGGTCVNLLIGGFHCVCPPGEYEHPYCEVSTRSFPPQSFVTFRGLRQRFHFTVSLAFATQDRNALLLYNGRFNEKHDFIALEIVEEQLQLTFSAGETTTTVTPQVPGGVSDGRWHSVLVQYYNKPNIGHLGLPHGPSGEKVAVVTVDDCDAAVAVHFGSYVGNYSCAAQGTQSGSKKSLDLTGPLLLGGVPNLPEDFPVHSRQFVGCMRNLSIDGRIVDMAAFIANNGTRAGCASQRNFCDGTSCQNGGTCVNRWNTYLCECPLRFGGKNCEQAMPHPQRFTGESVVLWSDLDITISVPWYLGLMFRTRKEDGVLMEATAGTSSRLHLQILNSYIRFEVSYGPSDVASMQLSKSRITDGGWHHLLIELRSAKEGKDIKYLAVMTLDYGMDQSTVQIGNQLPGLKMRTIVIGGVTEDKVSVRHGFRGCMQGVRMGETSTNIATLNMNDALKVRVKDGCDVEDPCASSPCPPHSHCRDTWDSYSCICDRGYFGKKCVDACLLNPCKHVAACVRSPNTPRGYSCECGPGHYGQYCENKVDLPCPKGWWGNPVCGPCHCAVSQGFDPDCNKTNGQCQCKENYYKPPAQDACLPCDCFPHGSHSRACDMDTGQCACKPGVIGRQCNRCDNPFAEVTSLGCEVIYNGCPRAFEAGIWWPQTKFGQPAAVPCPKGSVGNAVRHCSGEKGWLPPELFNCTSGSFVDLKALNEKLNRNETRMDGNRSLRLAKALRNATQGNSTLFGNDVRTAYQLLARILQHESRQQGFDLAATREANFHEDVVHTGSALLAPATEASWEQIQRSEAGAAQLLRHFEAYFSNVARNVKRTYLRPFVIVTANMILAVDIFDKLNFTGAQVPRFEDIQEELPRELESSVSFPADTFKPPEKKEGPVVRLTNRRTTPLTAQPEPRAERETSSSRRRRHPDEPGQFAVALVVIYRTLGQLLPEHYDPDHRSLRLPNRPVINTPVVSAMVYSEGTPLPSSLQRPILVEFSLLETEERSKPVCVFWNHSLDTGGTGGWSAKGCELLSRNRTHVTCQCSHSASCAVLMDISRREHGEVLPLKIITYAALSLSLVALLVAFVLLSLVRTLRSNLHSIHKNLITALFFSQLIFMVGINQTENPFLCTVVAILLHYVSMGTFAWTLVENLHVYRMLTEVRNIDTGPMRFYHVVGWGIPAIVTGLAVGLDPQGYGNPDFCWLSLQDTLIWSFAGPVGTVIIINTVIFVLSAKVSCQRKHHYYERKGVVSMLRTAFLLLLLVTATWLLGLLAVNSDTLSFHYLFAAFSCLQGIFVLLFHCVAHREVRKHLRAVLAGKKLQLDDSATTRATLLTRSLNCNNTYSEGPDMLRTALGESTASLDSTTRDEGVQKLSVSSGPARGNHGEPDASFIPRNSKKAHGPDSDSDSELSLDEHSSSYASSHTSDSEDDGGEAEDKWNPAGGPAHSTPKADALANHVPAGWPDESLAGSDSEELDTEPHLKVETKVSVELHRQAQGNHCGDRPSDPESGVLAKPVAVLSSQPQEQRKGILKNKVTYPPPLPEQPLKSRLREKLADCEQSPTSSRTSSLGSGDGVHATDCVITIKTPRREPGREHLNGVAMNVRTGSAQANGSDSEKP.

Positions 1–29 (MAPSSPRVLPALVLLAAAALPALELGAAA) are cleaved as a signal peptide. Topologically, residues 30-2484 (WELRVPGGAR…REHGEVLPLK (2455 aa)) are extracellular. Positions 222 to 243 (GTPSESPSVSPSLLNLSQPRAG) are enriched in low complexity. The tract at residues 222-267 (GTPSESPSVSPSLLNLSQPRAGVVRRSRRGTGSSTSPQFPLPSYQV) is disordered. N236 is a glycosylation site (N-linked (GlcNAc...) asparagine). 9 Cadherin domains span residues 261–368 (PLPS…SPVF), 369–474 (EQSE…YPQF), 475–580 (SEKR…APIF), 581–702 (VSSP…DPMF), 703–804 (TQPV…RPVF), 805–907 (QSSH…APRF), 908–1014 (LRDF…PPVF), 1015–1116 (EKDE…PPEL), and 1121–1239 (ILFN…SPLL). 3 N-linked (GlcNAc...) asparagine glycosylation sites follow: N561, N649, and N793. N1129, N1154, N1228, N1264, N1274, and N1302 each carry an N-linked (GlcNAc...) asparagine glycan. An EGF-like 1; calcium-binding domain is found at 1318–1376 (DDNICLREPCENYMKCVSVLRFDSSAPFISSTTVLFRPIHPITGLRCRCPPGFTGDYCE). 9 disulfide bridges follow: C1322/C1333, C1327/C1364, C1366/C1375, C1382/C1393, C1387/C1402, C1404/C1413, C1422/C1433, C1427/C1443, and C1445/C1455. Positions 1378–1414 (EIDLCYSNPCGANGRCRSREGGYTCECFEDFTGEHCQ) constitute an EGF-like 2; calcium-binding domain. An EGF-like 3; calcium-binding domain is found at 1418–1456 (RSGRCASGVCKNGGTCVNLLIGGFHCVCPPGEYEHPYCE). The Laminin G-like 1 domain occupies 1457–1661 (VSTRSFPPQS…IANNGTRAGC (205 aa)). Residues N1591, N1638, and N1655 are each glycosylated (N-linked (GlcNAc...) asparagine). 13 disulfides stabilise this stretch: C1635-C1661, C1668-C1679, C1673-C1688, C1690-C1699, C1855-C1885, C1891-C1902, C1896-C1911, C1913-C1922, C1926-C1937, C1931-C1949, C1951-C1960, C1968-C1981, and C1983-C1993. The EGF-like 4; calcium-binding domain maps to 1664-1700 (QRNFCDGTSCQNGGTCVNRWNTYLCECPLRFGGKNCE). Position 1681 is a (3R)-3-hydroxyasparagine (N1681). The Laminin G-like 2 domain occupies 1704–1885 (PHPQRFTGES…ALKVRVKDGC (182 aa)). The EGF-like 5; calcium-binding domain occupies 1887–1922 (VEDPCASSPCPPHSHCRDTWDSYSCICDRGYFGKKC). At D1904 the chain carries (3R)-3-hydroxyaspartate. In terms of domain architecture, EGF-like 6; calcium-binding spans 1923 to 1961 (VDACLLNPCKHVAACVRSPNTPRGYSCECGPGHYGQYCE). The EGF-like 7; calcium-binding domain occupies 1962 to 1994 (NKVDLPCPKGWWGNPVCGPCHCAVSQGFDPDCN). A glycan (N-linked (GlcNAc...) asparagine) is linked at N1994. The region spanning 1996-2031 (TNGQCQCKENYYKPPAQDACLPCDCFPHGSHSRACD) is the EGF-like 8; calcium-binding domain. 5 disulfides stabilise this stretch: C2000–C2015, C2002–C2018, C2020–C2030, C2039–C2048, and C2051–C2063. The 48-residue stretch at 2018 to 2065 (CDCFPHGSHSRACDMDTGQCACKPGVIGRQCNRCDNPFAEVTSLGCEV) folds into the Laminin EGF-like domain. N-linked (GlcNAc...) asparagine glycans are attached at residues N2118, N2137, N2144, N2155, N2160, and N2272. The disordered stretch occupies residues 2295–2346 (SVSFPADTFKPPEKKEGPVVRLTNRRTTPLTAQPEPRAERETSSSRRRRHPD). Residues 2312 to 2476 (PVVRLTNRRT…AVLMDISRRE (165 aa)) enclose the GAIN-B domain. 2 disulfide bridges follow: C2426/C2458 and C2446/C2460. A GPS region spans residues 2426–2476 (CVFWNHSLDTGGTGGWSAKGCELLSRNRTHVTCQCSHSASCAVLMDISRRE). N-linked (GlcNAc...) asparagine glycosylation is found at N2430 and N2452. The chain crosses the membrane as a helical span at residues 2485–2505 (IITYAALSLSLVALLVAFVLL). Over 2506–2516 (SLVRTLRSNLH) the chain is Cytoplasmic. A helical transmembrane segment spans residues 2517–2537 (SIHKNLITALFFSQLIFMVGI). N2538 carries an N-linked (GlcNAc...) asparagine glycan. Residues 2538-2542 (NQTEN) lie on the Extracellular side of the membrane. A helical membrane pass occupies residues 2543–2563 (PFLCTVVAILLHYVSMGTFAW). Residues 2564–2587 (TLVENLHVYRMLTEVRNIDTGPMR) are Cytoplasmic-facing. A helical membrane pass occupies residues 2588–2608 (FYHVVGWGIPAIVTGLAVGLD). Over 2609 to 2625 (PQGYGNPDFCWLSLQDT) the chain is Extracellular. The chain crosses the membrane as a helical span at residues 2626–2646 (LIWSFAGPVGTVIIINTVIFV). Residues 2647-2670 (LSAKVSCQRKHHYYERKGVVSMLR) are Cytoplasmic-facing. A helical transmembrane segment spans residues 2671-2691 (TAFLLLLLVTATWLLGLLAVN). At 2692–2694 (SDT) the chain is on the extracellular side. Residues 2695–2715 (LSFHYLFAAFSCLQGIFVLLF) traverse the membrane as a helical segment. The Cytoplasmic segment spans residues 2716 to 3034 (HCVAHREVRK…QANGSDSEKP (319 aa)). Positions 2774–3034 (TASLDSTTRD…QANGSDSEKP (261 aa)) are disordered. S2776, S2779, S2886, and S2888 each carry phosphoserine. Positions 2893-2909 (TEPHLKVETKVSVELHR) are enriched in basic and acidic residues. Residues 2976-2986 (SPTSSRTSSLG) are compositionally biased toward low complexity. The segment covering 3003 to 3012 (PRREPGREHL) has biased composition (basic and acidic residues). The segment covering 3020-3034 (RTGSAQANGSDSEKP) has biased composition (polar residues).

This sequence belongs to the G-protein coupled receptor 2 family. LN-TM7 subfamily. Post-translationally, the iron and 2-oxoglutarate dependent 3-hydroxylation of aspartate and asparagine is (R) stereospecific within EGF domains. As to expression, expressed in the brain, where it is localized principally in the ependymal cell layer, choroid plexus and the area postrema. Also found in spinal cord and in the eye.

The protein localises to the cell membrane. In terms of biological role, receptor that may have an important role in cell/cell signaling during nervous system formation. This Mus musculus (Mouse) protein is Cadherin EGF LAG seven-pass G-type receptor 1 (Celsr1).